The chain runs to 128 residues: Flagellar basal body rod protein FlgB (128 aa).

It belongs to the flagella basal body rod proteins family. In terms of assembly, the basal body constitutes a major portion of the flagellar organelle and consists of a number of rings mounted on a central rod. In Gram-negative bacteria, at least four rings, L, P, S and M are present, whereas Gram-positive bacteria lack the L and P rings. The rod consists of about 26 subunits of FlgG in the distal portion, and FlgB, FlgC and FlgF build up the proximal portion of the rod with about 6 subunits each. Rod assembly occurs by export via the flagellum-specific pathway of its constituent proteins and by their incorporation into the rod structure in the probable order of FlgB, FlgC, FlgF and FlgG. Another protein, FliE, also assembles onto the stable rod structure.

The protein localises to the bacterial flagellum basal body. Functionally, structural component of flagellum, the bacterial motility apparatus. Part of the rod structure of flagellar basal body. The sequence is that of Flagellar basal body rod protein FlgB from Cereibacter sphaeroides (Rhodobacter sphaeroides).